A 205-amino-acid chain; its full sequence is Large ribosomal subunit protein uL4 (205 aa).

Positions 56–78 (ISGTTAKPYRQKHTGRARQGSLR) are disordered.

This sequence belongs to the universal ribosomal protein uL4 family. Part of the 50S ribosomal subunit.

In terms of biological role, one of the primary rRNA binding proteins, this protein initially binds near the 5'-end of the 23S rRNA. It is important during the early stages of 50S assembly. It makes multiple contacts with different domains of the 23S rRNA in the assembled 50S subunit and ribosome. Its function is as follows. Forms part of the polypeptide exit tunnel. The sequence is that of Large ribosomal subunit protein uL4 from Ehrlichia canis (strain Jake).